The chain runs to 510 residues: NAD(P)H-quinone oxidoreductase subunit 2 B, chloroplastic (510 aa).

13 consecutive transmembrane segments (helical) span residues 24 to 44, 57 to 77, 99 to 119, 124 to 144, 149 to 169, 183 to 203, 227 to 247, 295 to 315, 323 to 343, 354 to 374, 395 to 415, 418 to 438, and 484 to 504; these read LLLF…GLIL, IPWL…SLLF, IFQF…VEYI, MAIT…MFLC, LITI…LSGY, YLLM…WLYG, PGIS…LSPA, WHLL…LIAI, MLAY…IVGD, YMLF…LFGL, ALSL…AGFF, LYLF…IGLL, and MIVC…IIAI.

Belongs to the complex I subunit 2 family. As to quaternary structure, NDH is composed of at least 16 different subunits, 5 of which are encoded in the nucleus.

Its subcellular location is the plastid. It is found in the chloroplast thylakoid membrane. It carries out the reaction a plastoquinone + NADH + (n+1) H(+)(in) = a plastoquinol + NAD(+) + n H(+)(out). The enzyme catalyses a plastoquinone + NADPH + (n+1) H(+)(in) = a plastoquinol + NADP(+) + n H(+)(out). In terms of biological role, NDH shuttles electrons from NAD(P)H:plastoquinone, via FMN and iron-sulfur (Fe-S) centers, to quinones in the photosynthetic chain and possibly in a chloroplast respiratory chain. The immediate electron acceptor for the enzyme in this species is believed to be plastoquinone. Couples the redox reaction to proton translocation, and thus conserves the redox energy in a proton gradient. The polypeptide is NAD(P)H-quinone oxidoreductase subunit 2 B, chloroplastic (Lactuca sativa (Garden lettuce)).